The primary structure comprises 246 residues: Sulfate transporter CysZ (246 aa).

A run of 4 helical transmembrane segments spans residues 24–44 (LFVLIPLTLNLLVFALLIGFA), 69–89 (IVWPLFVLLVLVIVFFTFTMV), 148–168 (LLVLSFVPGVNLIATPLWILF), and 214–234 (LLIPLVNLVMMPAAVAGATLF).

It belongs to the CysZ family.

It localises to the cell inner membrane. Functionally, high affinity, high specificity proton-dependent sulfate transporter, which mediates sulfate uptake. Provides the sulfur source for the cysteine synthesis pathway. This Pseudomonas aeruginosa (strain ATCC 15692 / DSM 22644 / CIP 104116 / JCM 14847 / LMG 12228 / 1C / PRS 101 / PAO1) protein is Sulfate transporter CysZ.